The chain runs to 277 residues: F420-dependent methylenetetrahydromethanopterin dehydrogenase (277 aa).

It belongs to the MTD family.

It carries out the reaction 5,10-methylenetetrahydromethanopterin + oxidized coenzyme F420-(gamma-L-Glu)(n) + 2 H(+) = 5,10-methenyl-5,6,7,8-tetrahydromethanopterin + reduced coenzyme F420-(gamma-L-Glu)(n). Its pathway is one-carbon metabolism; methanogenesis from CO(2); 5,10-methylene-5,6,7,8-tetrahydromethanopterin from 5,10-methenyl-5,6,7,8-tetrahydromethanopterin (coenzyme F420 route): step 1/1. Functionally, catalyzes the reversible reduction of methenyl-H(4)MPT(+) to methylene-H(4)MPT. The protein is F420-dependent methylenetetrahydromethanopterin dehydrogenase of Methanococcus maripaludis (strain C5 / ATCC BAA-1333).